Reading from the N-terminus, the 2302-residue chain is Phosphatidylinositol phosphatase PTPRQ (2302 aa).

Positions 1–18 (MMDFHFSFLFLLIGTSES) are cleaved as a signal peptide. Over 19 to 1908 (QVDVSSSFDG…GEGLSERTVE (1890 aa)) the chain is Extracellular. The N-linked (GlcNAc...) asparagine glycan is linked to Asn54. 17 Fibronectin type-III domains span residues 60–155 (PPVF…TAES), 159–254 (KVVN…SSST), 310–398 (PPQN…PPDV), 401–501 (AVFD…PHND), 474–566 (GFYE…TVRT), 570–665 (VPSS…TPED), 670–759 (SPQD…TSET), 764–854 (APEN…TEED), 859–948 (PPQN…TPEG), 953–1053 (PPND…TDQD), 1058–1151 (PVGN…TEED), 1156–1243 (PPII…TDES), 1248–1341 (PPQN…TQES), 1345–1431 (AVRN…LPET), 1435–1539 (APTN…TLPG), 1544–1642 (PPEN…TLES), and 1647–1748 (PPNN…IKAP). N-linked (GlcNAc...) asparagine glycosylation is found at Asn162, Asn169, Asn318, Asn354, and Asn389. Asn733 and Asn746 each carry an N-linked (GlcNAc...) asparagine glycan. N-linked (GlcNAc...) asparagine glycosylation is found at Asn904, Asn998, Asn1010, and Asn1040. 2 N-linked (GlcNAc...) asparagine glycosylation sites follow: Asn1251 and Asn1256. N-linked (GlcNAc...) asparagine glycosylation is present at Asn1805. The helical transmembrane segment at 1909–1929 (IILSVTLCILSIILLGTAIFA) threads the bilayer. Residues 1930-2302 (FVRIRQKQKE…VELEWEETTM (373 aa)) lie on the Cytoplasmic side of the membrane. One can recognise a Tyrosine-protein phosphatase domain in the interval 2006–2262 (FQEEFSELPK…IFLHQCILDL (257 aa)). Cys2203 functions as the Phosphocysteine intermediate in the catalytic mechanism.

It belongs to the protein-tyrosine phosphatase family. Receptor class 2A subfamily. In terms of assembly, interacts with TPRN. TPRN, CLIC5 and PTPQR form concentric rings at the base of stereocilia and may form a complex.

It localises to the cell projection. The protein resides in the stereocilium. The protein localises to the apical cell membrane. It is found in the basal cell membrane. The catalysed reaction is a 1,2-diacyl-sn-glycero-3-phospho-(1D-myo-inositol-3,4,5-trisphosphate) + H2O = a 1,2-diacyl-sn-glycero-3-phospho-(1D-myo-inositol-4,5-bisphosphate) + phosphate. It carries out the reaction a 1,2-diacyl-sn-glycero-3-phospho-(1D-myo-inositol-3,4,5-trisphosphate) + H2O = a 1,2-diacyl-sn-glycero-3-phospho-(1D-myo-inositol-3,4-bisphosphate) + phosphate. The enzyme catalyses a 1,2-diacyl-sn-glycero-3-phospho-(1D-myo-inositol-3,5-bisphosphate) + H2O = a 1,2-diacyl-sn-glycero-3-phospho-(1D-myo-inositol-5-phosphate) + phosphate. It catalyses the reaction a 1,2-diacyl-sn-glycero-3-phospho-(1D-myo-inositol-3,5-bisphosphate) + H2O = a 1,2-diacyl-sn-glycero-3-phospho-(1D-myo-inositol-3-phosphate) + phosphate. The catalysed reaction is a 1,2-diacyl-sn-glycero-3-phospho-(1D-myo-inositol-4,5-bisphosphate) + H2O = a 1,2-diacyl-sn-glycero-3-phospho-(1D-myo-inositol 4-phosphate) + phosphate. Dephosphorylates phosphatidylinositol phosphates, such as phosphatidylinositol 3,4,5-trisphosphate (PIP3) and phosphatidylinositol 3,5-diphosphates, with preference for PIP3. Phosphate can be hydrolyzed from the D3 and D5 positions in the inositol ring. Has low tyrosine-protein phosphatase activity in vitro; however, the relevance of such activity in vivo is unclear. Plays an important role in adipogenesis of mesenchymal stem cells (MSCs). Regulates the phosphorylation state of AKT1 by regulating the levels of PIP3 level in MSCs and preadipocyte cells. Required for hair bundle maturation, a process that enables hair cells to detect and transmit sound and balance signals effectively, therefore affecting auditory function. May act by regulating the level of phosphatidylinositol 4,5-bisphosphate (PIP2) level in the basal region of hair bundles. The sequence is that of Phosphatidylinositol phosphatase PTPRQ (Ptprq) from Rattus norvegicus (Rat).